The following is a 726-amino-acid chain: BRCA1-A complex subunit RAP80 (726 aa).

A disordered region spans residues 1 to 27 (MPRRKKKIKEASEGQNLEKKDLETTSS). The segment at 1–101 (MPRRKKKIKE…SEQEAKEVNN (101 aa)) is necessary for transcriptional repression. Positions 9–23 (KEASEGQNLEKKDLE) are enriched in basic and acidic residues. A Glycyl lysine isopeptide (Lys-Gly) (interchain with G-Cter in SUMO2) cross-link involves residue Lys-20. The residue at position 29 (Ser-29) is a Phosphoserine. Residue Lys-31 forms a Glycyl lysine isopeptide (Lys-Gly) (interchain with G-Cter in SUMO2) linkage. Residues Ser-44 and Ser-46 each carry the phosphoserine modification. Residues 47–67 (DGEETKEENGLQKMKTKQSNR) form a disordered region. Thr-51 carries the phosphothreonine modification. Positions 60–78 (MKTKQSNRSKCLAKRKIAQ) match the LR motif motif. Glycyl lysine isopeptide (Lys-Gly) (interchain with G-Cter in SUMO2) cross-links involve residues Lys-75 and Lys-90. UIM domains are found at residues 80 to 99 (SEEE…AKEV) and 104 to 124 (EKEE…RWSS). Disordered stretches follow at residues 93 to 112 (EQEA…LLRK) and 119 to 208 (NSRW…SRPV). Residues 97-103 (KEVNNQE) are UIM-linker. A necessary for interaction with NR6A1 N-terminus region spans residues 100 to 200 (NNQEEKEEEL…EEPLSGSSGS (101 aa)). Ser-140 is subject to Phosphoserine. Residues 177–188 (EEGKEPWDHSEN) show a composition bias toward basic and acidic residues. The segment covering 194 to 205 (LSGSSGSQDQSS) has biased composition (low complexity). Ser-205 is subject to Phosphoserine. Lys-245 is covalently cross-linked (Glycyl lysine isopeptide (Lys-Gly) (interchain with G-Cter in SUMO2)). An AIR region spans residues 270–400 (IGGTVHYYWG…EEEPTTGRGQ (131 aa)). The tract at residues 356–411 (GAREERQGSGASVWHSETKDSQKSPITSLKQRLLLEEEPTTGRGQSSQGLFVEETS) is disordered. Phosphoserine is present on residues Ser-379, Ser-402, and Ser-427. The necessary for interaction with NR6A1 C-terminus stretch occupies residues 400-507 (QSSQGLFVEE…DSRPPAVSAS (108 aa)). Residue Lys-436 forms a Glycyl lysine isopeptide (Lys-Gly) (interchain with G-Cter in SUMO2) linkage. The segment at 509–536 (RVSCPLCNQDFPPTKIEQHAMYCTGLME) adopts a UBZ4-type zinc-finger fold. 4 residues coordinate Zn(2+): Cys-512, Cys-515, His-527, and Cys-531. Residues 512 to 589 (CPLCNQDFPP…GEYQCHVETC (78 aa)) form a zinc-finger-like region region. Glycyl lysine isopeptide (Lys-Gly) (interchain with G-Cter in SUMO2) cross-links involve residues Lys-551, Lys-569, and Lys-616. The disordered stretch occupies residues 611–675 (APVEGKPKQR…DVEEAGCSRE (65 aa)). The residue at position 636 (Ser-636) is a Phosphoserine. Residues 640 to 653 (QSEHRTTGVERTPK) show a composition bias toward basic and acidic residues. A phosphoserine mark is found at Ser-664 and Ser-688. Lys-707 participates in a covalent cross-link: Glycyl lysine isopeptide (Lys-Gly) (interchain with G-Cter in SUMO2).

This sequence belongs to the RAP80 family. As to quaternary structure, component of the ARISC complex, at least composed of UIMC1/RAP80, ABRAXAS1, BRCC3/BRCC36, BABAM2 and BABAM1/NBA1. Component of the BRCA1-A complex, at least composed of the BRCA1, BARD1, UIMC1/RAP80, ABRAXAS1, BRCC3/BRCC36, BABAM2 and BABAM1/NBA1. In the BRCA1-A complex, interacts directly with ABRAXAS1. Interacts with UBE2I. Interacts with NR6A1. Interacts with ESR1. Interacts with TSP57. Interacts with TRAIP. In terms of processing, sumoylated. Post-translationally, phosphorylated upon DNA damage by ATM or ATR.

The protein resides in the nucleus. Its function is as follows. Ubiquitin-binding protein. Specifically recognizes and binds 'Lys-63'-linked ubiquitin. Plays a central role in the BRCA1-A complex by specifically binding 'Lys-63'-linked ubiquitinated histones H2A and H2AX at DNA lesions sites, leading to target the BRCA1-BARD1 heterodimer to sites of DNA damage at double-strand breaks (DSBs). The BRCA1-A complex also possesses deubiquitinase activity that specifically removes 'Lys-63'-linked ubiquitin on histones H2A and H2AX. Also weakly binds monoubiquitin but with much less affinity than 'Lys-63'-linked ubiquitin. May interact with monoubiquitinated histones H2A and H2B; the relevance of such results is however unclear in vivo. Does not bind Lys-48'-linked ubiquitin. May indirectly act as a transcriptional repressor by inhibiting the interaction of NR6A1 with the corepressor NCOR1. This Rattus norvegicus (Rat) protein is BRCA1-A complex subunit RAP80 (Uimc1).